Reading from the N-terminus, the 142-residue chain is Augurin-A (142 aa).

Residues 1–28 (MLSEKFHLRLLTLLTLLTALSLTDVASE) form the signal peptide. 2 consecutive propeptides follow at residues 29-66 (SKLE…LKRP) and 127-142 (GAAS…YDYY).

This sequence belongs to the augurin family.

It localises to the secreted. It is found in the cytoplasm. The protein resides in the apical cell membrane. In terms of biological role, probable hormone. Required for the proper formation of the central nervous system by attenuating cell proliferation during development. The sequence is that of Augurin-A from Danio rerio (Zebrafish).